Here is a 152-residue protein sequence, read N- to C-terminus: Superoxide dismutase [Cu-Zn] (152 aa).

The Cu cation site is built by His45, His47, and His62. Residues Cys56 and Cys145 are joined by a disulfide bond. 4 residues coordinate Zn(2+): His62, His70, His79, and Asp82. Residue His119 participates in Cu cation binding.

Belongs to the Cu-Zn superoxide dismutase family. In terms of assembly, homodimer. Cu cation is required as a cofactor. It depends on Zn(2+) as a cofactor.

It is found in the cytoplasm. The enzyme catalyses 2 superoxide + 2 H(+) = H2O2 + O2. Its function is as follows. Destroys radicals which are normally produced within the cells and which are toxic to biological systems. The polypeptide is Superoxide dismutase [Cu-Zn] (SODCC) (Ipomoea batatas (Sweet potato)).